The primary structure comprises 275 residues: Pyrroline-5-carboxylate reductase (275 aa).

Belongs to the pyrroline-5-carboxylate reductase family.

The protein localises to the cytoplasm. The enzyme catalyses L-proline + NADP(+) = (S)-1-pyrroline-5-carboxylate + NADPH + 2 H(+). It catalyses the reaction L-proline + NAD(+) = (S)-1-pyrroline-5-carboxylate + NADH + 2 H(+). The protein operates within amino-acid biosynthesis; L-proline biosynthesis; L-proline from L-glutamate 5-semialdehyde: step 1/1. Catalyzes the reduction of 1-pyrroline-5-carboxylate (PCA) to L-proline. In Pasteurella multocida (strain Pm70), this protein is Pyrroline-5-carboxylate reductase.